The primary structure comprises 267 residues: Glutamate 5-kinase (267 aa).

Lys18 serves as a coordination point for ATP. Substrate is bound by residues Ser58, Asp145, and Asn157. ATP-binding positions include 177-178 (SD) and 219-225 (TGGMATK).

The protein belongs to the glutamate 5-kinase family.

The protein localises to the cytoplasm. The enzyme catalyses L-glutamate + ATP = L-glutamyl 5-phosphate + ADP. It functions in the pathway amino-acid biosynthesis; L-proline biosynthesis; L-glutamate 5-semialdehyde from L-glutamate: step 1/2. In terms of biological role, catalyzes the transfer of a phosphate group to glutamate to form L-glutamate 5-phosphate. This is Glutamate 5-kinase from Clostridium tetani (strain Massachusetts / E88).